Reading from the N-terminus, the 176-residue chain is Shikimate kinase (176 aa).

12–17 (GSGKST) lines the ATP pocket. A Mg(2+)-binding site is contributed by serine 16. Residues aspartate 34, arginine 58, and glycine 80 each coordinate substrate. An ATP-binding site is contributed by arginine 117. Residue arginine 136 coordinates substrate. Arginine 153 contacts ATP.

It belongs to the shikimate kinase family. In terms of assembly, monomer. Mg(2+) serves as cofactor.

Its subcellular location is the cytoplasm. It catalyses the reaction shikimate + ATP = 3-phosphoshikimate + ADP + H(+). The protein operates within metabolic intermediate biosynthesis; chorismate biosynthesis; chorismate from D-erythrose 4-phosphate and phosphoenolpyruvate: step 5/7. In terms of biological role, catalyzes the specific phosphorylation of the 3-hydroxyl group of shikimic acid using ATP as a cosubstrate. The polypeptide is Shikimate kinase (Mycobacterium bovis (strain ATCC BAA-935 / AF2122/97)).